The primary structure comprises 347 residues: GMP reductase (347 aa).

108–131 (ADFQKTKDIMAISDEFIFICIDIA) is a binding site for NADP(+). The K(+) site is built by G181 and G183. The Thioimidate intermediate role is filled by C186. 216–239 (IIGDGGCSCAGDVAKAFGGGADFV) contacts NADP(+).

The protein belongs to the IMPDH/GMPR family. GuaC type 1 subfamily. In terms of assembly, homotetramer.

It carries out the reaction IMP + NH4(+) + NADP(+) = GMP + NADPH + 2 H(+). In terms of biological role, catalyzes the irreversible NADPH-dependent deamination of GMP to IMP. It functions in the conversion of nucleobase, nucleoside and nucleotide derivatives of G to A nucleotides, and in maintaining the intracellular balance of A and G nucleotides. The sequence is that of GMP reductase from Vibrio campbellii (strain ATCC BAA-1116).